Consider the following 253-residue polypeptide: Complement C1q subcomponent subunit B (253 aa).

Positions methionine 1–alanine 27 are cleaved as a signal peptide. A Pyrrolidone carboxylic acid modification is found at glutamine 28. 4-hydroxyproline occurs at positions 35, 38, 41, 53, and 56. Collagen-like domains lie at isoleucine 37–proline 86 and glycine 60–glycine 114. Residues proline 38–aspartate 115 are disordered. 5-hydroxylysine occurs at positions 59 and 62. Proline 65 carries the 4-hydroxyproline modification. Basic and acidic residues predominate over residues aspartate 70–aspartate 79. Lysine 77 carries the post-translational modification 5-hydroxylysine. Residues proline 80–lysine 92 are compositionally biased toward low complexity. Residues proline 83 and proline 86 each carry the 4-hydroxyproline modification. 5-hydroxylysine is present on residues lysine 92 and lysine 98. A compositionally biased stretch (gly residues) spans glycine 96–glycine 105. 4-hydroxyproline occurs at positions 101, 104, and 107. At lysine 110 the chain carries 5-hydroxylysine. A C1q domain is found at lysine 117 to alanine 253. A disulfide bridge connects residues cysteine 181 and cysteine 198. Residues aspartate 199, tyrosine 200, and glutamine 206 each contribute to the Ca(2+) site.

In terms of assembly, core component of the complement C1 complex, a calcium-dependent complex composed of 1 molecule of the C1Q subcomplex, 2 molecules of C1R and 2 molecules of C1S. The C1Q subcomplex is composed 18 subunits: 3 chains of C1QA, C1QB, and C1QC trimerize to form 6 collagen-like triple helices connected to six globular ligand-recognition modules (C1q domain). In terms of processing, hydroxylated on lysine and proline residues. Hydroxylated lysine residues can be glycosylated. Human C1Q contains up to 68.3 hydroxylysine-galactosylglucose residues and up to 2.5 hydroxylysine-galactose per molecule. Total percentage hydroxylysine residues glycosylated is 86.4%.

It is found in the secreted. The protein resides in the cell surface. The C1Q subcomplex is inhibited by sulfated molecules, such as triterpenoid sulfates, heparan sulfate, or chondroitin sulfates. Functionally, core component of the complement C1 complex, a multiprotein complex that initiates the classical pathway of the complement system, a cascade of proteins that leads to phagocytosis and breakdown of pathogens and signaling that strengthens the adaptive immune system. The classical complement pathway is initiated by the C1Q subcomplex of the C1 complex, which specifically binds IgG or IgM immunoglobulins complexed with antigens, forming antigen-antibody complexes on the surface of pathogens: C1QA, together with C1QB and C1QC, specifically recognizes and binds the Fc regions of IgG or IgM via its C1q domain. Immunoglobulin-binding activates the proenzyme C1R, which cleaves C1S, initiating the proteolytic cascade of the complement system. The C1Q subcomplex is activated by a hexamer of IgG complexed with antigens, while it is activated by a pentameric IgM. The C1Q subcomplex also recognizes and binds phosphatidylserine exposed on the surface of cells undergoing programmed cell death, possibly promoting activation of the complement system. The polypeptide is Complement C1q subcomponent subunit B (Homo sapiens (Human)).